The primary structure comprises 197 residues: Putative phosphopantothenoylcysteine decarboxylase (197 aa).

Residues Phe-52 and 102-105 (SANT) contribute to the FMN site. Asn-139 contributes to the substrate binding site. Cys-174 functions as the Proton donor in the catalytic mechanism.

Belongs to the HFCD (homooligomeric flavin containing Cys decarboxylase) superfamily. As to quaternary structure, homotrimer. FMN is required as a cofactor.

It catalyses the reaction N-[(R)-4-phosphopantothenoyl]-L-cysteine + H(+) = (R)-4'-phosphopantetheine + CO2. The protein operates within cofactor biosynthesis; coenzyme A biosynthesis; CoA from (R)-pantothenate: step 3/5. Necessary for the biosynthesis of coenzyme A. Catalyzes the decarboxylation of 4-phosphopantothenoylcysteine to form 4'-phosphopantotheine. This Dictyostelium discoideum (Social amoeba) protein is Putative phosphopantothenoylcysteine decarboxylase (ppcdc).